A 261-amino-acid polypeptide reads, in one-letter code: MAHQAHAYHMVDPSPWPLTGAIAALLMTSGLAIWFHFHSTTLMTLGLILLLLTMYQWWRDIIREGTFQGHHTPPVQKGLRYGMILFITSEVFFFLGFFWAFYHSSLAPTPELGGCWPPTGITPLDPFEVPLLNTAVLLASGVTVTWAHHSIMEGERKQAIQSLALTILLGLYFTALQAMEYYEAPFTIADGVYGSTFFVATGFHGLHVIIGSTFLAVCLLRQIQYHFTSEHHFGFEAAAWYWHFVDVVWLFLYVSIYWWGS.

Over 1–15 the chain is Mitochondrial matrix; the sequence is MAHQAHAYHMVDPSP. Residues 16–34 form a helical membrane-spanning segment; it reads WPLTGAIAALLMTSGLAIW. At 35–40 the chain is on the mitochondrial intermembrane side; sequence FHFHST. A helical transmembrane segment spans residues 41–66; that stretch reads TLMTLGLILLLLTMYQWWRDIIREGT. The Mitochondrial matrix segment spans residues 67 to 72; the sequence is FQGHHT. A helical transmembrane segment spans residues 73–105; that stretch reads PPVQKGLRYGMILFITSEVFFFLGFFWAFYHSS. Over 106-128 the chain is Mitochondrial intermembrane; sequence LAPTPELGGCWPPTGITPLDPFE. Residues 129–152 traverse the membrane as a helical segment; that stretch reads VPLLNTAVLLASGVTVTWAHHSIM. Residues 153-155 lie on the Mitochondrial matrix side of the membrane; the sequence is EGE. A helical membrane pass occupies residues 156 to 183; that stretch reads RKQAIQSLALTILLGLYFTALQAMEYYE. Topologically, residues 184–190 are mitochondrial intermembrane; it reads APFTIAD. Residues 191–223 traverse the membrane as a helical segment; the sequence is GVYGSTFFVATGFHGLHVIIGSTFLAVCLLRQI. Over 224–232 the chain is Mitochondrial matrix; the sequence is QYHFTSEHH. Residues 233–256 traverse the membrane as a helical segment; sequence FGFEAAAWYWHFVDVVWLFLYVSI. Residues 257–261 lie on the Mitochondrial intermembrane side of the membrane; that stretch reads YWWGS.

Belongs to the cytochrome c oxidase subunit 3 family. As to quaternary structure, component of the cytochrome c oxidase (complex IV, CIV), a multisubunit enzyme composed of 14 subunits. The complex is composed of a catalytic core of 3 subunits MT-CO1, MT-CO2 and MT-CO3, encoded in the mitochondrial DNA, and 11 supernumerary subunits COX4I, COX5A, COX5B, COX6A, COX6B, COX6C, COX7A, COX7B, COX7C, COX8 and NDUFA4, which are encoded in the nuclear genome. The complex exists as a monomer or a dimer and forms supercomplexes (SCs) in the inner mitochondrial membrane with NADH-ubiquinone oxidoreductase (complex I, CI) and ubiquinol-cytochrome c oxidoreductase (cytochrome b-c1 complex, complex III, CIII), resulting in different assemblies (supercomplex SCI(1)III(2)IV(1) and megacomplex MCI(2)III(2)IV(2)).

The protein resides in the mitochondrion inner membrane. It carries out the reaction 4 Fe(II)-[cytochrome c] + O2 + 8 H(+)(in) = 4 Fe(III)-[cytochrome c] + 2 H2O + 4 H(+)(out). Its function is as follows. Component of the cytochrome c oxidase, the last enzyme in the mitochondrial electron transport chain which drives oxidative phosphorylation. The respiratory chain contains 3 multisubunit complexes succinate dehydrogenase (complex II, CII), ubiquinol-cytochrome c oxidoreductase (cytochrome b-c1 complex, complex III, CIII) and cytochrome c oxidase (complex IV, CIV), that cooperate to transfer electrons derived from NADH and succinate to molecular oxygen, creating an electrochemical gradient over the inner membrane that drives transmembrane transport and the ATP synthase. Cytochrome c oxidase is the component of the respiratory chain that catalyzes the reduction of oxygen to water. Electrons originating from reduced cytochrome c in the intermembrane space (IMS) are transferred via the dinuclear copper A center (CU(A)) of subunit 2 and heme A of subunit 1 to the active site in subunit 1, a binuclear center (BNC) formed by heme A3 and copper B (CU(B)). The BNC reduces molecular oxygen to 2 water molecules using 4 electrons from cytochrome c in the IMS and 4 protons from the mitochondrial matrix. This Cyprinus carpio (Common carp) protein is Cytochrome c oxidase subunit 3 (mt-co3).